Here is a 453-residue protein sequence, read N- to C-terminus: tRNA-2-methylthio-N(6)-dimethylallyladenosine synthase (453 aa).

Positions 21–137 constitute an MTTase N-terminal domain; that stretch reads RGVYISTYGC…LPQLVAKSFA (117 aa). [4Fe-4S] cluster contacts are provided by Cys-30, Cys-66, Cys-100, Cys-174, Cys-178, and Cys-181. The region spanning 160 to 389 is the Radical SAM core domain; sequence RNPGVATYVN…FDVHEAMAFE (230 aa). In terms of domain architecture, TRAM spans 392 to 453; it reads KRYEGTTMKV…FPAVFRGEMI (62 aa).

The protein belongs to the methylthiotransferase family. MiaB subfamily. In terms of assembly, monomer. It depends on [4Fe-4S] cluster as a cofactor.

The protein resides in the cytoplasm. It catalyses the reaction N(6)-dimethylallyladenosine(37) in tRNA + (sulfur carrier)-SH + AH2 + 2 S-adenosyl-L-methionine = 2-methylsulfanyl-N(6)-dimethylallyladenosine(37) in tRNA + (sulfur carrier)-H + 5'-deoxyadenosine + L-methionine + A + S-adenosyl-L-homocysteine + 2 H(+). In terms of biological role, catalyzes the methylthiolation of N6-(dimethylallyl)adenosine (i(6)A), leading to the formation of 2-methylthio-N6-(dimethylallyl)adenosine (ms(2)i(6)A) at position 37 in tRNAs that read codons beginning with uridine. This is tRNA-2-methylthio-N(6)-dimethylallyladenosine synthase from Bdellovibrio bacteriovorus (strain ATCC 15356 / DSM 50701 / NCIMB 9529 / HD100).